Reading from the N-terminus, the 311-residue chain is Hevamine-A (311 aa).

A signal peptide spans 1–26 (MAKRTQAILLLLLAISLIMSSSHVDG). The 276-residue stretch at 27–302 (GGIAIYWGQN…SSILDSVLFL (276 aa)) folds into the GH18 domain. Cystine bridges form between C46-C93 and C76-C83. E153 acts as the Proton donor in catalysis. An intrachain disulfide couples C185 to C214. Residues 300 to 311 (LFLHSEECMTVL) constitute a propeptide, removed in mature form.

Belongs to the glycosyl hydrolase 18 family. Chitinase class II subfamily.

The protein resides in the vacuole. It catalyses the reaction Random endo-hydrolysis of N-acetyl-beta-D-glucosaminide (1-&gt;4)-beta-linkages in chitin and chitodextrins.. The enzyme catalyses Hydrolysis of (1-&gt;4)-beta-linkages between N-acetylmuramic acid and N-acetyl-D-glucosamine residues in a peptidoglycan and between N-acetyl-D-glucosamine residues in chitodextrins.. In terms of biological role, bifunctional enzyme with lysozyme / chitinase activity. May have a role in plugging the latex vessel and cessation of latex flow. The sequence is that of Hevamine-A from Hevea brasiliensis (Para rubber tree).